We begin with the raw amino-acid sequence, 117 residues long: Large ribosomal subunit protein uL18 (117 aa).

The protein belongs to the universal ribosomal protein uL18 family. As to quaternary structure, part of the 50S ribosomal subunit; part of the 5S rRNA/L5/L18/L25 subcomplex. Contacts the 5S and 23S rRNAs.

This is one of the proteins that bind and probably mediate the attachment of the 5S RNA into the large ribosomal subunit, where it forms part of the central protuberance. The sequence is that of Large ribosomal subunit protein uL18 from Acidithiobacillus ferrooxidans (strain ATCC 23270 / DSM 14882 / CIP 104768 / NCIMB 8455) (Ferrobacillus ferrooxidans (strain ATCC 23270)).